The following is a 234-amino-acid chain: tRNA (guanine-N(1)-)-methyltransferase (234 aa).

Gly113 provides a ligand contact to S-adenosyl-L-methionine.

Belongs to the RNA methyltransferase TrmD family. As to quaternary structure, homodimer.

The protein resides in the cytoplasm. The catalysed reaction is guanosine(37) in tRNA + S-adenosyl-L-methionine = N(1)-methylguanosine(37) in tRNA + S-adenosyl-L-homocysteine + H(+). Its function is as follows. Specifically methylates guanosine-37 in various tRNAs. The chain is tRNA (guanine-N(1)-)-methyltransferase from Gluconobacter oxydans (strain 621H) (Gluconobacter suboxydans).